We begin with the raw amino-acid sequence, 190 residues long: Glycerol-3-phosphate acyltransferase 2 (190 aa).

5 helical membrane-spanning segments follow: residues 1-21 (MNIL…ALIV), 53-73 (VIVA…PLIL), 76-96 (TINP…SVFA), 110-130 (VFLF…VLTL), and 152-172 (LIFE…SIII).

This sequence belongs to the PlsY family. In terms of assembly, probably interacts with PlsX.

It localises to the cell membrane. It carries out the reaction an acyl phosphate + sn-glycerol 3-phosphate = a 1-acyl-sn-glycero-3-phosphate + phosphate. Its pathway is lipid metabolism; phospholipid metabolism. Functionally, catalyzes the transfer of an acyl group from acyl-phosphate (acyl-PO(4)) to glycerol-3-phosphate (G3P) to form lysophosphatidic acid (LPA). This enzyme utilizes acyl-phosphate as fatty acyl donor, but not acyl-CoA or acyl-ACP. This Bacillus anthracis protein is Glycerol-3-phosphate acyltransferase 2.